The sequence spans 195 residues: Pyridoxal 5'-phosphate synthase subunit PdxT (195 aa).

55 to 57 (GES) is a binding site for L-glutamine. Cys-84 (nucleophile) is an active-site residue. L-glutamine is bound by residues Arg-111 and 139–140 (IR). Catalysis depends on charge relay system residues His-175 and Glu-177.

Belongs to the glutaminase PdxT/SNO family. As to quaternary structure, in the presence of PdxS, forms a dodecamer of heterodimers. Only shows activity in the heterodimer.

The catalysed reaction is aldehydo-D-ribose 5-phosphate + D-glyceraldehyde 3-phosphate + L-glutamine = pyridoxal 5'-phosphate + L-glutamate + phosphate + 3 H2O + H(+). The enzyme catalyses L-glutamine + H2O = L-glutamate + NH4(+). It functions in the pathway cofactor biosynthesis; pyridoxal 5'-phosphate biosynthesis. In terms of biological role, catalyzes the hydrolysis of glutamine to glutamate and ammonia as part of the biosynthesis of pyridoxal 5'-phosphate. The resulting ammonia molecule is channeled to the active site of PdxS. The sequence is that of Pyridoxal 5'-phosphate synthase subunit PdxT from Methanosphaerula palustris (strain ATCC BAA-1556 / DSM 19958 / E1-9c).